The following is a 526-amino-acid chain: Reelin domain-containing protein 1 (526 aa).

The first 23 residues, 1–23, serve as a signal peptide directing secretion; sequence MRMQAALVGWACTTLCLASCSSA. Residues 24–179 enclose the Reelin domain; that stretch reads FSHGASTVAC…SAHSDDRMEP (156 aa). The Extracellular portion of the chain corresponds to 24–443; that stretch reads FSHGASTVAC…PLGIQLRTPQ (420 aa). Disordered stretches follow at residues 242–272, 294–336, and 370–398; these read DAETLSQPSSHTATEGSINQQPSGDSNPTLE, FASS…TVTQ, and LQTSGTSGLPAAGDQSEASRASASFLPQS. The span at 245-271 shows a compositional bias: polar residues; sequence TLSQPSSHTATEGSINQQPSGDSNPTL. Residues 385–396 show a composition bias toward polar residues; the sequence is SEASRASASFLP. Residues 444–462 traverse the membrane as a helical segment; sequence LGILLCLSATLGMALAAGL. The Cytoplasmic segment spans residues 463–526; sequence RYLHTQYCHQ…PSVGSKKTVL (64 aa).

It localises to the membrane. The chain is Reelin domain-containing protein 1 from Homo sapiens (Human).